The chain runs to 292 residues: Elongation factor Ts (292 aa).

The interval 80-83 (TDFV) is involved in Mg(2+) ion dislocation from EF-Tu.

This sequence belongs to the EF-Ts family.

Its subcellular location is the cytoplasm. Its function is as follows. Associates with the EF-Tu.GDP complex and induces the exchange of GDP to GTP. It remains bound to the aminoacyl-tRNA.EF-Tu.GTP complex up to the GTP hydrolysis stage on the ribosome. The sequence is that of Elongation factor Ts from Ralstonia nicotianae (strain ATCC BAA-1114 / GMI1000) (Ralstonia solanacearum).